The chain runs to 756 residues: Putative beta-xylosidase (756 aa).

The signal sequence occupies residues 1–18 (MKKLLFTFLVSTGTIFFS). Residue C19 is the site of N-palmitoyl cysteine attachment. The S-diacylglycerol cysteine moiety is linked to residue C19.

The protein belongs to the glycosyl hydrolase 3 family.

It is found in the cell outer membrane. Functionally, glycoside hydrolase probably involved in ulvan degradation. Ulvan is the main polysaccharide component of the Ulvales (green seaweed) cell wall. It is composed of disaccharide building blocks comprising 3-sulfated rhamnose (Rha3S) linked to D-glucuronic acid (GlcA), L-iduronic acid (IduA), or D-xylose (Xyl). The polypeptide is Putative beta-xylosidase (Formosa agariphila (strain DSM 15362 / KCTC 12365 / LMG 23005 / KMM 3901 / M-2Alg 35-1)).